The primary structure comprises 126 residues: Holo-[acyl-carrier-protein] synthase (126 aa).

Mg(2+)-binding residues include D9 and E58.

The protein belongs to the P-Pant transferase superfamily. AcpS family. The cofactor is Mg(2+).

It is found in the cytoplasm. It catalyses the reaction apo-[ACP] + CoA = holo-[ACP] + adenosine 3',5'-bisphosphate + H(+). In terms of biological role, transfers the 4'-phosphopantetheine moiety from coenzyme A to a Ser of acyl-carrier-protein. The protein is Holo-[acyl-carrier-protein] synthase of Serratia proteamaculans (strain 568).